Consider the following 845-residue polypeptide: Aryl hydrocarbon receptor (845 aa).

Positions 1–10 are excised as a propeptide; that stretch reads MNSSSASITY. The span at 1–10 shows a compositional bias: polar residues; the sequence is MNSSSASITY. A disordered region spans residues 1–39; that stretch reads MNSSSASITYASRKRRKPVQKTVKPVPAEGIKSNPSKRH. Short sequence motifs (nuclear localization signal) lie at residues 13–16 and 37–42; these read RKRR and KRHRDR. A bHLH domain is found at 27–80; that stretch reads PAEGIKSNPSKRHRDRLNTELDRLASLLPFPQDVVNKLDKLSVLRLSVSYLRAK. Required for maintaining the overall integrity of the AHR:ARNT heterodimer and its transcriptional activity regions lie at residues 50 to 82, 117 to 125, and 265 to 267; these read LASL…AKSF, LLQALNGFV, and FAI. The Nuclear export signal motif lies at 64–72; that stretch reads LDKLSVLRL. Positions 110-180 constitute a PAS 1 domain; the sequence is NLQEGEFLLQ…RQLHWALNPS (71 aa). Residues 274–341 form the PAS 2 domain; it reads PSILEIRTKN…CAEYHIRMIK (68 aa). In terms of domain architecture, PAC spans 347–385; that stretch reads LIVFRLLTKDNRWTWVQSNARLVYKNGRPDYIIATQRPL. The disordered stretch occupies residues 820–845; sequence NNTQPTTHLHPSEARPFSDLTSSGFL.

Homodimer. Heterodimer; efficient DNA binding requires dimerization with another bHLH protein. Interacts with ARNT; the heterodimer ARNT:AHR binds to core DNA sequence 5'-TGCGTG-3' within the dioxin response element (DRE) of target gene promoters and activates their transcription. Binds MYBBP1A. Interacts with coactivators including SRC-1, RIP140 and NOCA7, and with the corepressor SMRT. Interacts with NEDD8 and IVNS1ABP. Interacts with BMAL1. Interacts with HSP90AB1. Interacts with TIPARP; leading to mono-ADP-ribosylation of AHR and subsequent inhibition of AHR. In terms of processing, mono-ADP-ribosylated, leading to inhibit transcription activator activity of AHR.

The protein resides in the cytoplasm. Its subcellular location is the nucleus. Functionally, ligand-activated transcription factor that enables cells to adapt to changing conditions by sensing compounds from the environment, diet, microbiome and cellular metabolism, and which plays important roles in development, immunity and cancer. Upon ligand binding, translocates into the nucleus, where it heterodimerizes with ARNT and induces transcription by binding to xenobiotic response elements (XRE). Regulates a variety of biological processes, including angiogenesis, hematopoiesis, drug and lipid metabolism, cell motility and immune modulation. Xenobiotics can act as ligands: upon xenobiotic-binding, activates the expression of multiple phase I and II xenobiotic chemical metabolizing enzyme genes (such as the CYP1A1 gene). Mediates biochemical and toxic effects of halogenated aromatic hydrocarbons. Next to xenobiotics, natural ligands derived from plants, microbiota, and endogenous metabolism are potent AHR agonists. Tryptophan (Trp) derivatives constitute an important class of endogenous AHR ligands. Acts as a negative regulator of anti-tumor immunity: indoles and kynurenic acid generated by Trp catabolism act as ligand and activate AHR, thereby promoting AHR-driven cancer cell motility and suppressing adaptive immunity. Regulates the circadian clock by inhibiting the basal and circadian expression of the core circadian component PER1. Inhibits PER1 by repressing the CLOCK-BMAL1 heterodimer mediated transcriptional activation of PER1. The heterodimer ARNT:AHR binds to core DNA sequence 5'-TGCGTG-3' within the dioxin response element (DRE) of target gene promoters and activates their transcription. This is Aryl hydrocarbon receptor (AHR) from Delphinapterus leucas (Beluga whale).